The primary structure comprises 222 residues: Probable fimbrial chaperone EcpB (222 aa).

An N-terminal signal peptide occupies residues 1-20 (MKKHLLPLALLFSGISPAQA).

Belongs to the EcpB/EcpE family.

Part of the ecpRABCDE operon, which encodes the E.coli common pilus (ECP). ECP is found in both commensal and pathogenic strains and plays a dual role in early-stage biofilm development and host cell recognition. In Escherichia coli (strain K12), this protein is Probable fimbrial chaperone EcpB (ecpB).